Consider the following 457-residue polypeptide: Subtilisin-like serine protease Pen c 2 (457 aa).

The first 16 residues, 1–16, serve as a signal peptide directing secretion; sequence MKGFLGLALLPLLTAA. The propeptide at 17–136 is removed in mature form; it reads SPVSVESIHN…IEKDSEVHHF (120 aa). The 92-residue stretch at 43-134 folds into the Inhibitor I9 domain; that stretch reads SYIVVFKKHV…DYIEKDSEVH (92 aa). A Peptidase S8 domain is found at 146–457; the sequence is PWGLARISHR…YTDIVAQGGY (312 aa). Catalysis depends on charge relay system residues Asp-182 and His-214. Residues Asn-244 and Asn-284 are each glycosylated (N-linked (GlcNAc...) asparagine). Ser-380 (charge relay system) is an active-site residue. N-linked (GlcNAc...) asparagine glycosylation is present at Asn-447.

The protein belongs to the peptidase S8 family.

Its function is as follows. Serine protease. The protein is Subtilisin-like serine protease Pen c 2 of Penicillium citrinum.